The following is a 411-amino-acid chain: Arginase (411 aa).

The interval 83-106 (NNYINNNDNNNDNNNDNNNDNNNN) is disordered. His193, Asp216, His218, and Asp220 together coordinate Mn(2+). L-arginine contacts are provided by Asn222, Ser229, and Asp274. 2 residues coordinate Mn(2+): Asp323 and Asp325.

The protein belongs to the arginase family. In terms of assembly, homotrimer; oligomerization is dependent on Mn(2+) binding. Mn(2+) serves as cofactor.

It carries out the reaction L-arginine + H2O = urea + L-ornithine. Its pathway is nitrogen metabolism; urea cycle; L-ornithine and urea from L-arginine: step 1/1. Feedback inhibition by product L-ornithine,. Inhibited by 2(S)-amino-6-boronohexanoic acid (ABH); however, with less efficiency than human ARG1. Functionally, catalyzes the hydrolysis of L-arginine into urea and L-ornithine, which is a precursor for polyamine biosynthesis. May play a role in parasite intra-hepatic development during the host liver stage. In Plasmodium falciparum (isolate 3D7), this protein is Arginase.